Here is a 272-residue protein sequence, read N- to C-terminus: Hemin import ATP-binding protein HmuV (272 aa).

Residues 2 to 255 enclose the ABC transporter domain; it reads LNAEHLHVAR…DLIERCYGFR (254 aa). 34-41 provides a ligand contact to ATP; it reads GRNGAGKS.

The protein belongs to the ABC transporter superfamily. Heme (hemin) importer (TC 3.A.1.14.5) family. In terms of assembly, the complex is composed of two ATP-binding proteins (HmuV), two transmembrane proteins (HmuU) and a solute-binding protein (HmuT).

The protein localises to the cell inner membrane. Its function is as follows. Part of the ABC transporter complex HmuTUV involved in hemin import. Responsible for energy coupling to the transport system. This is Hemin import ATP-binding protein HmuV from Burkholderia thailandensis (strain ATCC 700388 / DSM 13276 / CCUG 48851 / CIP 106301 / E264).